The primary structure comprises 393 residues: NAD(P)H-quinone oxidoreductase subunit H, chloroplastic (393 aa).

It belongs to the complex I 49 kDa subunit family. NDH is composed of at least 16 different subunits, 5 of which are encoded in the nucleus.

The protein resides in the plastid. Its subcellular location is the chloroplast thylakoid membrane. The catalysed reaction is a plastoquinone + NADH + (n+1) H(+)(in) = a plastoquinol + NAD(+) + n H(+)(out). The enzyme catalyses a plastoquinone + NADPH + (n+1) H(+)(in) = a plastoquinol + NADP(+) + n H(+)(out). In terms of biological role, NDH shuttles electrons from NAD(P)H:plastoquinone, via FMN and iron-sulfur (Fe-S) centers, to quinones in the photosynthetic chain and possibly in a chloroplast respiratory chain. The immediate electron acceptor for the enzyme in this species is believed to be plastoquinone. Couples the redox reaction to proton translocation, and thus conserves the redox energy in a proton gradient. This chain is NAD(P)H-quinone oxidoreductase subunit H, chloroplastic, found in Guizotia abyssinica (Niger).